A 212-amino-acid polypeptide reads, in one-letter code: Glycerol-3-phosphate acyltransferase (212 aa).

The next 5 membrane-spanning stretches (helical) occupy residues isoleucine 3–serine 23, lysine 51–alanine 71, aspartate 78–phenylalanine 98, alanine 115–phenylalanine 135, and serine 139–threonine 159.

This sequence belongs to the PlsY family. Probably interacts with PlsX.

Its subcellular location is the cell inner membrane. The catalysed reaction is an acyl phosphate + sn-glycerol 3-phosphate = a 1-acyl-sn-glycero-3-phosphate + phosphate. Its pathway is lipid metabolism; phospholipid metabolism. In terms of biological role, catalyzes the transfer of an acyl group from acyl-phosphate (acyl-PO(4)) to glycerol-3-phosphate (G3P) to form lysophosphatidic acid (LPA). This enzyme utilizes acyl-phosphate as fatty acyl donor, but not acyl-CoA or acyl-ACP. In Burkholderia multivorans (strain ATCC 17616 / 249), this protein is Glycerol-3-phosphate acyltransferase.